The sequence spans 432 residues: Glutamyl-tRNA reductase (432 aa).

Substrate-binding positions include 55-58, S114, 119-121, and Q125; these read TCNR and ETQ. The active-site Nucleophile is the C56. 194 to 199 contributes to the NADP(+) binding site; that stretch reads GAGEMI.

The protein belongs to the glutamyl-tRNA reductase family. In terms of assembly, homodimer.

It carries out the reaction (S)-4-amino-5-oxopentanoate + tRNA(Glu) + NADP(+) = L-glutamyl-tRNA(Glu) + NADPH + H(+). It functions in the pathway porphyrin-containing compound metabolism; protoporphyrin-IX biosynthesis; 5-aminolevulinate from L-glutamyl-tRNA(Glu): step 1/2. Functionally, catalyzes the NADPH-dependent reduction of glutamyl-tRNA(Glu) to glutamate 1-semialdehyde (GSA). The protein is Glutamyl-tRNA reductase of Burkholderia ambifaria (strain ATCC BAA-244 / DSM 16087 / CCUG 44356 / LMG 19182 / AMMD) (Burkholderia cepacia (strain AMMD)).